The chain runs to 1260 residues: ATP-dependent helicase/deoxyribonuclease subunit B (1260 aa).

Belongs to the helicase family. AddB/RexB type 2 subfamily. Heterodimer of AddA and RexB. It depends on Mg(2+) as a cofactor.

The heterodimer acts as both an ATP-dependent DNA helicase and an ATP-dependent, dual-direction single-stranded exonuclease. Recognizes the chi site generating a DNA molecule suitable for the initiation of homologous recombination. This subunit has 5' -&gt; 3' nuclease activity but not helicase activity. The sequence is that of ATP-dependent helicase/deoxyribonuclease subunit B from Limosilactobacillus reuteri (strain DSM 20016) (Lactobacillus reuteri).